A 261-amino-acid polypeptide reads, in one-letter code: Carnitinyl-CoA dehydratase (261 aa).

Glu111 (nucleophile) is an active-site residue. Glu131 (proton acceptor) is an active-site residue.

This sequence belongs to the enoyl-CoA hydratase/isomerase family.

The enzyme catalyses (R)-carnitinyl-CoA = crotonobetainyl-CoA + H2O. It participates in amine and polyamine metabolism; carnitine metabolism. Functionally, catalyzes the reversible dehydration of L-carnitinyl-CoA to crotonobetainyl-CoA. In Escherichia coli O157:H7, this protein is Carnitinyl-CoA dehydratase.